Consider the following 782-residue polypeptide: Phosphate transporter PHO1 (782 aa).

Residues 1 to 386 (MVKFSKELEA…HQTKDSHMVT (386 aa)) are Cytoplasmic-facing. One can recognise an SPX domain in the interval 2-334 (VKFSKELEAQ…GQNASSTYLK (333 aa)). The tract at residues 165-202 (KKRNLSGSNSHRSFSSSVRNSDFSAGSPGELSEIQSET) is disordered. Over residues 170–188 (SGSNSHRSFSSSVRNSDFS) the composition is skewed to low complexity. Residues 315–322 (KIMKKFDK) form an important for inositol polyphosphate binding region. A helical transmembrane segment spans residues 387 to 407 (FFVGLFTGCFISLFVIYIILA). The Lumenal segment spans residues 408-423 (HLSGIFTSSDQVSYLE). The helical transmembrane segment at 424–444 (TVYPVFSVFALLSLHMFMYGC) threads the bilayer. Over 445-473 (NLYMWKNTRINYTFIFEFAPNTALRYRDA) the chain is Cytoplasmic. The helical transmembrane segment at 474–494 (FLMGTTFMTSVVAAMVIHLIL) threads the bilayer. Residues 495 to 506 (RASGFSASQVDT) lie on the Lumenal side of the membrane. The chain crosses the membrane as a helical span at residues 507 to 527 (IPGILLLIFICVLICPFNTFY). Residues 528–593 (RPTRFCFIRI…THEYNTCKNG (66 aa)) are Cytoplasmic-facing. Residues 591 to 782 (KNGRYYREFA…LPFLDRDSDG (192 aa)) form the EXS domain. Residues 594-614 (RYYREFAYLISFLPYFWRAMQ) form a helical membrane-spanning segment. The Lumenal segment spans residues 615-619 (CVRRW). A helical membrane pass occupies residues 620–639 (WDESNPDHLINMGKYVSAMV). At 640–782 (AAGVRITYAR…LPFLDRDSDG (143 aa)) the chain is on the cytoplasmic side.

It belongs to the SYG1 (TC 2.A.94) family. Interacts with PHO2. PHO1 degradation is PHO2 dependent and involves multivesicular body-mediated vacuolar proteolysis. In terms of tissue distribution, predominantly in roots, but also weak expression in the lower part of the hypocotyl. In the stellar cells, including the pericycle and xylem parenchyma cells, but not in the cortical or epidermal cells. Expressed in guard cells.

It localises to the golgi apparatus membrane. The protein resides in the golgi apparatus. It is found in the trans-Golgi network membrane. The protein localises to the endoplasmic reticulum membrane. Functionally, inositol polyphosphate sensor that associates with transcription factors to regulate inorganic phosphate (Pi) starvation responses. Probably acts by binding inositol polyphosphate via its SPX domain. Acts as a Pi exporter, mediating efflux of Pi out of cells. Transfers Pi from the epidermal and cortical cells to the root xylem vessels. Involved in the transfer of Pi from roots to shoots. Involved in abscisic acid (ABA) induction of stomatal closure and ABA repression of stomatal opening. This Arabidopsis thaliana (Mouse-ear cress) protein is Phosphate transporter PHO1.